We begin with the raw amino-acid sequence, 72 residues long: Heat shock factor-binding protein 1-like protein 1 (72 aa).

Residues 12–66 are a coiled coil; that stretch reads DLLQNAAENLLQEVEEHFQALTATLNLRMEEMGNRIEDLQRNVDDLMAQAGIENS.

It belongs to the HSBP1 family.

The polypeptide is Heat shock factor-binding protein 1-like protein 1 (Hsbp1l1) (Rattus norvegicus (Rat)).